We begin with the raw amino-acid sequence, 308 residues long: D-alanine--D-alanine ligase (308 aa).

In terms of domain architecture, ATP-grasp spans 102–302 (KTVAKSAGIP…FGALLSWMVE (201 aa)). Residue 128 to 183 (PMEPPYVVKPVAEGSSFGVVIVREGQSHPPQVLGSAEWGYGERVMVERYIPGRELT) participates in ATP binding. Mg(2+)-binding residues include Asp252, Glu269, and Asn271.

The protein belongs to the D-alanine--D-alanine ligase family. Mg(2+) serves as cofactor. The cofactor is Mn(2+).

Its subcellular location is the cytoplasm. It catalyses the reaction 2 D-alanine + ATP = D-alanyl-D-alanine + ADP + phosphate + H(+). Its pathway is cell wall biogenesis; peptidoglycan biosynthesis. In terms of biological role, cell wall formation. This is D-alanine--D-alanine ligase from Chelativorans sp. (strain BNC1).